Consider the following 393-residue polypeptide: Lysine/ornithine decarboxylase (393 aa).

N6-(pyridoxal phosphate)lysine is present on Lys-51. Residue Cys-323 is the Proton donor; shared with dimeric partner of the active site.

It belongs to the Orn/Lys/Arg decarboxylase class-II family. Homodimer. Pyridoxal 5'-phosphate is required as a cofactor.

The enzyme catalyses L-lysine + H(+) = cadaverine + CO2. The catalysed reaction is L-ornithine + H(+) = putrescine + CO2. It functions in the pathway amine and polyamine biosynthesis; putrescine biosynthesis via L-ornithine pathway; putrescine from L-ornithine: step 1/1. Inhibited competitively by both alpha-difluoromethyllysine and alpha-difluoromethylornithine. Decarboxylates both L-lysine and L-ornithine with similar catalytic efficiency. The chain is Lysine/ornithine decarboxylase (ldc) from Selenomonas ruminantium.